We begin with the raw amino-acid sequence, 82 residues long: Small ribosomal subunit protein bS16 (82 aa).

The protein belongs to the bacterial ribosomal protein bS16 family.

The chain is Small ribosomal subunit protein bS16 from Actinobacillus pleuropneumoniae serotype 5b (strain L20).